Here is a 400-residue protein sequence, read N- to C-terminus: MTKTFKKFSIAGLALLFMATAAFAGWSTKASAADMRSLTAAQITAEMGAGWNLGNQLEATVNGTPNETSWGNPTITPELIKKVKAAGFKTIRIPVSYLNYIGSAPNYTVNASWLNRIQQVVDYAYNEGLYVVINMHGDGFHSIPGSWLHVNSSNQNVIRDKYQKVWQQVATRFSAYNERLIFESMNEVFDGNYNNPNTSYYGNLNAYNQIFVDTVRKTGGNNNARWLLVPGWNTNIDYTVGNYGFVVPTDNFRSSAIPSSQKRIMISAHYYSPWDFAGEENGNITQWGATATNPAKRSTWGQEDYLDSQFKSMYDKFVTQGYPVVMGEFGSIDKSSYDSSNNNYRAVYAKAVTATAKKYKLVPVYWDNGFNGQHGFALFNRFNNTVTQQNIINAIMQGMQ.

A signal peptide spans 1–32; it reads MTKTFKKFSIAGLALLFMATAAFAGWSTKASA. The Proton donor role is filled by glutamate 187. Residue glutamate 328 is the Nucleophile of the active site.

This sequence belongs to the glycosyl hydrolase 5 (cellulase A) family.

The protein resides in the secreted. It catalyses the reaction Endohydrolysis of (1-&gt;4)-beta-D-glucosidic linkages in cellulose, lichenin and cereal beta-D-glucans.. With respect to regulation, strongly inhibited by Hg(2+), Ag(+) and Fe(3+). To a lesser extent, is also inhibited by Pb(2+), Mn(2+), Sn(2+) and Cu(2+). By contrast, Ni(2+), Zn(2+), Co(2+), Ba(2+) and NH(4)(+) do not affect enzyme activity, while 10 mM Ca(2+), and Mg(2+) produce a stimulating effect. Is also strongly inhibited by chemicals such as N-bromosuccinimide and dimethyl(2-dihydroxy-5-nitrobenzyl)sulphonium bromide. Is not affected by N-acetylimidazole. Endoglucanase with high activity on carboxymethylcellulose (CMC) and lichenan, but not active on Avicel. The protein is Endoglucanase A (celA) of Paenibacillus barcinonensis.